Consider the following 207-residue polypeptide: Protein GET1 (207 aa).

Residues Met-1–Leu-4 lie on the Lumenal side of the membrane. The chain crosses the membrane as a helical span at residues Leu-5 to Ser-24. Topologically, residues Thr-25 to Arg-110 are cytoplasmic. Positions Met-44–Arg-97 form a coiled coil. Residues Trp-111–Phe-131 form a helical membrane-spanning segment. The Lumenal segment spans residues Thr-132–Thr-155. A helical transmembrane segment spans residues Val-156–Val-172. At Gly-173–Gln-207 the chain is on the cytoplasmic side.

The protein belongs to the WRB/GET1 family. In terms of assembly, interacts with GET3.

The protein resides in the endoplasmic reticulum membrane. Its function is as follows. Required for the post-translational delivery of tail-anchored (TA) proteins to the endoplasmic reticulum. Acts as a membrane receptor for soluble GET3, which recognizes and selectively binds the transmembrane domain of TA proteins in the cytosol. This chain is Protein GET1, found in Paracoccidioides lutzii (strain ATCC MYA-826 / Pb01) (Paracoccidioides brasiliensis).